The sequence spans 180 residues: Large ribosomal subunit protein uL5 (180 aa).

Belongs to the universal ribosomal protein uL5 family. In terms of assembly, part of the 50S ribosomal subunit; part of the 5S rRNA/L5/L18/L25 subcomplex. Contacts the 5S rRNA and the P site tRNA. Forms a bridge to the 30S subunit in the 70S ribosome.

Its function is as follows. This is one of the proteins that bind and probably mediate the attachment of the 5S RNA into the large ribosomal subunit, where it forms part of the central protuberance. In the 70S ribosome it contacts protein S13 of the 30S subunit (bridge B1b), connecting the 2 subunits; this bridge is implicated in subunit movement. Contacts the P site tRNA; the 5S rRNA and some of its associated proteins might help stabilize positioning of ribosome-bound tRNAs. In Chloroflexus aurantiacus (strain ATCC 29364 / DSM 637 / Y-400-fl), this protein is Large ribosomal subunit protein uL5.